The sequence spans 76 residues: Small ribosomal subunit protein bS18 (76 aa).

This sequence belongs to the bacterial ribosomal protein bS18 family. In terms of assembly, part of the 30S ribosomal subunit. Forms a tight heterodimer with protein bS6.

In terms of biological role, binds as a heterodimer with protein bS6 to the central domain of the 16S rRNA, where it helps stabilize the platform of the 30S subunit. The chain is Small ribosomal subunit protein bS18 from Marinobacter nauticus (strain ATCC 700491 / DSM 11845 / VT8) (Marinobacter aquaeolei).